The chain runs to 389 residues: Phenylpropanoylacetyl-CoA synthase (389 aa).

Cys-163 is a catalytic residue.

It belongs to the thiolase-like superfamily. Chalcone/stilbene synthases family. As to quaternary structure, homodimer. As to expression, expressed in both the leaf and rhizome, with higher expression in the rhizome.

The enzyme catalyses (E)-feruloyl-CoA + malonyl-CoA + H(+) = (E)-feruloylacetyl-CoA + CO2 + CoA. It catalyses the reaction 4-coumaroyl-CoA + malonyl-CoA + H(+) = (4-coumaroyl)acetyl-CoA + CO2 + CoA. It participates in secondary metabolite biosynthesis; flavonoid biosynthesis. Functionally, catalyzes the formation of feruloyldiketide-CoA by condensing feruloyl-CoA and malonyl-CoA in the curcuminoid biosynthesis. Has no activity with cinnamoyl-CoA. The sequence is that of Phenylpropanoylacetyl-CoA synthase (DCS) from Curcuma longa (Turmeric).